The primary structure comprises 1214 residues: MDIQEQFEGYLREEVDLLNKFEDSHFKQLEVFYTNSQADHVINKDKAQFSDLPFHTTLYKEVNGKRVKLGTLLNWTKAERLDTIRHESMIKDERLRRLIDFDYSWIDYAVVLQRYLDEGNVIAPADILKFDSDFINNIKHPTEKNNFLDIKVIKECETYILMKDDNGIRDPDILRAWELDSIPDVIELDVDGEVKKFNLRKEMIKRIQDEAPVYFFASVSLCSRNLDPNISEVKLWLEYFIGSEDFFGFNGPNVVVSKSLLAAKRFEVVVNHLRKVAAFELDDESKEVMTEWLKYIMIDPVYRSYKNRGAFGNLNQHVFARTKSEGLSWSLIDIGTTNFELKPTKKLAGSYVKKFNLVDDVLVEESLKDLRNEGLYKMADITRRMIDADITPENVKKGKLNRLALSYCGYTGSHSATAMVKQFNGTKDLDPNCDPMFVDIVKDNMKVYMQEGLQKYPHGSRKINRLDILFKGGTSSASSTNEHATVNGRFRYRSELYRERDVNSSTVFKTATAGQYRVVKKISAKLKSKNANIITHPMNFINSKVSDLDVVVNAGSRLVRGTRAKRIITPNYGTIYAASLMTVLPAVRLLSSRASNMGALSTQGSLVDRAPHDVMAPQLAVTSSDDVSKVCVAKDFGQFDTSQWGQISKAHADGVRSMKVHYSMGHDALVDLDLNDASFADLLEVTAMSFEKPLKYKMNGLVCESAGVKSGELTTQTRNTTTNISHSTVALDDYNNRAYRLNLPKLELVTDNKVGDDSVEVLRVVDGSPLTPEIAKLYVSCMQDHADRNHLEISAKRTIVGNNVAEHIKIWVFKGYLALDVFLDSVTSEKNSFSNLNYLEQVNILYDMAMTLMIRYCSVQACMTQFCNDMKLLNGIRAGNYTFIPTPKIICAYGTPEICLRAPEIRSFGRYLPIDKDEYSVLNDLVASLSTNKPKMEFVSQMIEQNGNKVHSLWLDHFKRKNDVNPNGGGIHISEGLKRLMPEYCEKHLNELVYKTLDDKVIRDYTSDIIISNICKGKLSKAPKLAFYANFYLSLTNTNGVDSPYLTADEGVKNVHRVIGLSYRNTLSTSPTSNVDRILRNNPGSAPAYLTGNDILGVLSDYPYQNWRTVVELLDITEPSATAIIEVATNQMHAYLADKDLNTANLFDNTSRTYDISDRTYPKFVNITSSLSNSNRRGFQIEAMKHVIYMARRGVAVLANTHPTKIGNTVYYDY.

A RdRp catalytic domain is found at Ala610–Ala805.

It belongs to the reoviridae RNA-directed RNA polymerase family.

The protein localises to the virion. The enzyme catalyses RNA(n) + a ribonucleoside 5'-triphosphate = RNA(n+1) + diphosphate. Functionally, RNA-directed RNA polymerase that is involved in transcription and genome replication. Following infection, it catalyzes the synthesis of fully conservative plus strands. After core assembly, which consists in recruitment of one capped plus-strand for each genomic segments and polymerase complexes, the polymerase switches mode and catalyzes the synthesis of complementary minus-strands. The polypeptide is RNA-directed RNA polymerase VP1 (Segment-1) (Banna virus (BAV)).